We begin with the raw amino-acid sequence, 831 residues long: DNA helicase MCM8 (831 aa).

The segment covering 1–20 has biased composition (gly residues); that stretch reads MSQGWRGGSGGWRGGGGGNP. A disordered region spans residues 1–53; the sequence is MSQGWRGGSGGWRGGGGGNPYAGAWRGRPWRGRGQGGTWSRNNGRDPVCFAPP. The MCM domain maps to 395-602; the sequence is LFQLIVNSLC…DHDHLLSEHV (208 aa). Residue 447-454 coordinates ATP; the sequence is GDPGLGKS.

The protein belongs to the MCM family. Component of the MCM8-MCM9 complex, which forms a hexamer composed of mcm8 and mcm9.

The protein resides in the nucleus. The catalysed reaction is ATP + H2O = ADP + phosphate + H(+). Its function is as follows. Component of the MCM8-MCM9 complex, a complex involved in homologous recombination repair following DNA interstrand cross-links and plays a key role during gametogenesis. The MCM8-MCM9 complex probably acts as a hexameric helicase required to process aberrant forks into homologous recombination substrates and to orchestrate homologous recombination with resection, fork stabilization and fork restart. In eggs, required for elongation during DNA replication by facilitating the recruitment of rpa2/rpa34 and stimulating the processivity of DNA polymerases at replication foci. Probably not required for DNA replication in other cells. This is DNA helicase MCM8 (mcm8) from Xenopus laevis (African clawed frog).